The following is a 181-amino-acid chain: Putative poly [ADP-ribose] polymerase-like 100L (181 aa).

In terms of domain architecture, PARP catalytic spans 1–181 (MDNLKEEETN…KIKYIIHITK (181 aa)).

The enzyme catalyses NAD(+) + (ADP-D-ribosyl)n-acceptor = nicotinamide + (ADP-D-ribosyl)n+1-acceptor + H(+).. The sequence is that of Putative poly [ADP-ribose] polymerase-like 100L from Invertebrate iridescent virus 6 (IIV-6).